Here is a 306-residue protein sequence, read N- to C-terminus: UDP-N-acetylenolpyruvoylglucosamine reductase (306 aa).

The 165-residue stretch at 34 to 198 (VGGPADLLIT…LEVTFKLHNS (165 aa)) folds into the FAD-binding PCMH-type domain. Arg177 is an active-site residue. The active-site Proton donor is Ser227. Residue Glu297 is part of the active site.

The protein belongs to the MurB family. Requires FAD as cofactor.

It is found in the cytoplasm. The catalysed reaction is UDP-N-acetyl-alpha-D-muramate + NADP(+) = UDP-N-acetyl-3-O-(1-carboxyvinyl)-alpha-D-glucosamine + NADPH + H(+). It functions in the pathway cell wall biogenesis; peptidoglycan biosynthesis. Cell wall formation. This Clostridium botulinum (strain ATCC 19397 / Type A) protein is UDP-N-acetylenolpyruvoylglucosamine reductase.